We begin with the raw amino-acid sequence, 473 residues long: Glutamate--tRNA ligase (473 aa).

Residues 11 to 21 (PSPTGFLHIGG) carry the 'HIGH' region motif. The 'KMSKS' region signature appears at 240 to 244 (KLSKR). K243 serves as a coordination point for ATP.

It belongs to the class-I aminoacyl-tRNA synthetase family. Glutamate--tRNA ligase type 1 subfamily. As to quaternary structure, monomer.

Its subcellular location is the cytoplasm. The catalysed reaction is tRNA(Glu) + L-glutamate + ATP = L-glutamyl-tRNA(Glu) + AMP + diphosphate. Its function is as follows. Catalyzes the attachment of glutamate to tRNA(Glu) in a two-step reaction: glutamate is first activated by ATP to form Glu-AMP and then transferred to the acceptor end of tRNA(Glu). The protein is Glutamate--tRNA ligase of Rhodopseudomonas palustris (strain ATCC BAA-98 / CGA009).